Consider the following 64-residue polypeptide: Gallinacin-2 (64 aa).

The first 22 residues, 1–22 (MRILYLLFSLLFLALQVSPGLS), serve as a signal peptide directing secretion. A propeptide spanning residues 23–28 (SPRRDM) is cleaved from the precursor. Disulfide bonds link Cys-31–Cys-57, Cys-36–Cys-51, and Cys-41–Cys-58.

In terms of tissue distribution, expressed in circulating heterophil granulocytes and bone marrow (at protein level). Strong expression in the bone marrow, lung and testis. Moderate expression in the bursa and intestine. Low expression in the cloaca, gall bladder, brain, pancreas, trachea, air sacs and spleen. Expressed in the vagina, ovarian stroma and the theca layer of the ovarian follicle, but not in the granulosa layer of the ovarian follicle.

It localises to the secreted. It is found in the cytoplasmic granule. In terms of biological role, potent antibacterial activity against the Gram-negative bacterium E.coli ML-35, and against the Gram-positive bacterium L.monocytogenes EGD. Lacks antifungal activity against C.albicans. The protein is Gallinacin-2 (GAL2) of Gallus gallus (Chicken).